A 75-amino-acid chain; its full sequence is Tautomerase PptA (75 aa).

Pro2 (proton acceptor; via imino nitrogen) is an active-site residue.

This sequence belongs to the 4-oxalocrotonate tautomerase family. PptA subfamily. As to quaternary structure, homodimer.

The protein resides in the cytoplasm. In Klebsiella pneumoniae subsp. pneumoniae (strain ATCC 700721 / MGH 78578), this protein is Tautomerase PptA.